The primary structure comprises 69 residues: Small, acid-soluble spore protein 1 (69 aa).

It belongs to the alpha/beta-type SASP family.

SASP are bound to spore DNA. They are double-stranded DNA-binding proteins that cause DNA to change to an a-like conformation. They protect the DNA backbone from chemical and enzymatic cleavage and are thus involved in dormant spore's high resistance to UV light. The polypeptide is Small, acid-soluble spore protein 1 (Su-1) (Sporosarcina ureae).